The primary structure comprises 161 residues: Regulator of ribonuclease activity A (161 aa).

It belongs to the RraA family. As to quaternary structure, homotrimer. Binds to both RNA-binding sites in the C-terminal region of Rne and to RhlB.

The protein localises to the cytoplasm. Its function is as follows. Globally modulates RNA abundance by binding to RNase E (Rne) and regulating its endonucleolytic activity. Can modulate Rne action in a substrate-dependent manner by altering the composition of the degradosome. Modulates RNA-binding and helicase activities of the degradosome. In Klebsiella pneumoniae (strain 342), this protein is Regulator of ribonuclease activity A.